We begin with the raw amino-acid sequence, 288 residues long: MITLAVKVGMIQLCGCSGCHISLLDLHDKLLEVLPNLEIVYAPIIADPKEIPEGIDVFLVEGGIRNEHDEHLIHEIREKSKIVIAWGTCAAYGGIPGLGNLYKKEELLNYVYSTDSTENKGEIPSEEIPPLEEYVKPIKDFIKVDYTIPGCPPTPKMIADAIIALLNGEEPKLPTKIVCDECPRKKENVFPETFKRTHEGRPDPERCLFEQGYTCLGFATRAGCGAKCPSAGVPCRGCFGKTDKSLDLGANAANVLANAGEAALEIPDKVALLNRFTLPDALINRKAK.

This sequence belongs to the [NiFe]/[NiFeSe] hydrogenase small subunit family. As to quaternary structure, the F420-non-reducing hydrogenase vhu is composed of four subunits; VhuA, VhuD, VhuG and VhuU.

The chain is F420-non-reducing hydrogenase vhu subunit G (vhuG) from Methanocaldococcus jannaschii (strain ATCC 43067 / DSM 2661 / JAL-1 / JCM 10045 / NBRC 100440) (Methanococcus jannaschii).